Here is a 95-residue protein sequence, read N- to C-terminus: UPF0473 protein PEPE_1260 (95 aa).

Belongs to the UPF0473 family.

In Pediococcus pentosaceus (strain ATCC 25745 / CCUG 21536 / LMG 10740 / 183-1w), this protein is UPF0473 protein PEPE_1260.